Consider the following 444-residue polypeptide: Killer cell immunoglobulin-like receptor 3DL1 (444 aa).

The first 21 residues, 1 to 21, serve as a signal peptide directing secretion; it reads MSLMVVSMACVGLFLVQRAGP. Over 22–340 the chain is Extracellular; it reads HMGGQDKPFL…SKSGNPRHLH (319 aa). 3 Ig-like C2-type domains span residues 42 to 102, 137 to 202, and 237 to 300; these read GGHV…HPHS, GERV…VTHT, and GESV…FRHS. 3 cysteine pairs are disulfide-bonded: C49–C95, C144–C195, and C244–C293. N-linked (GlcNAc...) asparagine glycans are attached at residues N92, N179, and N273. Residues 315 to 334 form a disordered region; that stretch reads VTGNPSSSWPSPTEPSSKSG. Residues 319-333 are compositionally biased toward low complexity; sequence PSSSWPSPTEPSSKS. Residues 341–360 form a helical membrane-spanning segment; sequence ILIGTSVVIILFILLLFFLL. The Cytoplasmic segment spans residues 361 to 444; it reads HLWCSNKKNA…KPRSKVVSCP (84 aa). Disordered stretches follow at residues 375–394 and 409–444; these read QEPA…QDPE and RKIT…VSCP.

It belongs to the immunoglobulin superfamily.

It is found in the cell membrane. In terms of biological role, receptor on natural killer (NK) cells for HLA Bw4 allele. Inhibits the activity of NK cells thus preventing cell lysis. In Homo sapiens (Human), this protein is Killer cell immunoglobulin-like receptor 3DL1.